The following is a 294-amino-acid chain: Large ribosomal subunit protein uL4m (294 aa).

Residues 119–139 (EVSGGGRKPWQQKGSGRARHG) form a disordered region. Residue arginine 147 is modified to Omega-N-methylarginine.

The protein belongs to the universal ribosomal protein uL4 family. As to quaternary structure, component of the mitochondrial ribosome large subunit (39S) which comprises a 16S rRNA and about 50 distinct proteins. Interacts with MIEF1 upstream open reading frame protein.

Its subcellular location is the mitochondrion. This chain is Large ribosomal subunit protein uL4m (Mrpl4), found in Mus musculus (Mouse).